Here is a 404-residue protein sequence, read N- to C-terminus: Exodeoxyribonuclease 7 large subunit (404 aa).

It belongs to the XseA family. In terms of assembly, heterooligomer composed of large and small subunits.

The protein localises to the cytoplasm. It catalyses the reaction Exonucleolytic cleavage in either 5'- to 3'- or 3'- to 5'-direction to yield nucleoside 5'-phosphates.. Its function is as follows. Bidirectionally degrades single-stranded DNA into large acid-insoluble oligonucleotides, which are then degraded further into small acid-soluble oligonucleotides. The chain is Exodeoxyribonuclease 7 large subunit from Caldanaerobacter subterraneus subsp. tengcongensis (strain DSM 15242 / JCM 11007 / NBRC 100824 / MB4) (Thermoanaerobacter tengcongensis).